Reading from the N-terminus, the 311-residue chain is Asialoglycoprotein receptor 2 (311 aa).

Residues 1-44 (MAKDFQDIQQLSSEENDHPFHQGEGPGTRRLNPRRGNPFLKGPP) are disordered. At 1 to 58 (MAKDFQDIQQLSSEENDHPFHQGEGPGTRRLNPRRGNPFLKGPPPAQPLAQRLCSMVC) the chain is on the cytoplasmic side. The Endocytosis signal signature appears at 5–8 (FQDI). A Phosphoserine modification is found at Ser-13. Residue Cys-54 is the site of S-palmitoyl cysteine attachment. A helical; Signal-anchor for type II membrane protein transmembrane segment spans residues 59-79 (FSLLALSFNILLLVVICVTGS). Residues 80–311 (QSEGHGGAQL…KRRNATGEVA (232 aa)) lie on the Extracellular side of the membrane. Residues Asn-102 and Asn-170 are each glycosylated (N-linked (GlcNAc...) asparagine). The C-type lectin domain maps to 176-302 (CCPVNWVEHQ…LQVYRWVCEK (127 aa)). 3 disulfide bridges follow: Cys-177–Cys-188, Cys-205–Cys-300, and Cys-278–Cys-292. Residue Asn-305 is glycosylated (N-linked (GlcNAc...) asparagine).

In terms of assembly, the functioning ligand-binding unit of this receptor is thought to be at least a dimer. Interacts with LASS2. (Microbial infection) Interacts with hepatitis E virus capsid protein ORF2. As to expression, expressed exclusively in hepatic parenchymal cells.

Its subcellular location is the membrane. Functionally, mediates the endocytosis of plasma glycoproteins to which the terminal sialic acid residue on their complex carbohydrate moieties has been removed. The receptor recognizes terminal galactose and N-acetylgalactosamine units. After ligand binding to the receptor, the resulting complex is internalized and transported to a sorting organelle, where receptor and ligand are disassociated. The receptor then returns to the cell membrane surface. This is Asialoglycoprotein receptor 2 (ASGR2) from Homo sapiens (Human).